The sequence spans 315 residues: Protein OPG185 (315 aa).

Residues 1–16 form the signal peptide; the sequence is MARLPILLLLISLVYS. Positions 17 to 121 constitute an Ig-like V-type domain; sequence TPSPQTSKKI…NDTDKVDYEE (105 aa). Topologically, residues 17–279 are virion surface; it reads TPSPQTSKKI…SNYKTKDFVE (263 aa). Cysteines 34 and 103 form a disulfide. Residues Asn37, Asn69, Asn112, and Asn161 are each glycosylated (N-linked (GlcNAc...) asparagine; by host). Positions 192-202 are enriched in polar residues; sequence INTVSASSGES. Positions 192–214 are disordered; that stretch reads INTVSASSGESTTDETPEPITDK. Asn254 carries an N-linked (GlcNAc...) asparagine; by host glycan. Residues 280–303 traverse the membrane as a helical segment; it reads IFGITALIILSAVAIFCITYYIYN. Over 304–315 the chain is Intravirion; it reads KRSRKYKTENKV.

Belongs to the orthopoxvirus OPG185 family. As to quaternary structure, heterodimerizes with OPG040. The heterodimer OPG185-OPG040 interacts with components of the entry fusion complex OPG143 and OPG094. Heterodimer with C3/VPC protein; disulfide-linked. Glycosylated; contains phosphate and sulfate-substituted glycans. O-glycosylation is required for hemagglutination and hemadsorption activities of infected cell membranes.

The protein localises to the virion membrane. Its subcellular location is the host membrane. Functionally, prevents cell to cell fusion by interacting with and directing the viral OPG040 protein on the host plasma membrane. The OPG185-OPG040 complex associates with components of the entry fusion complex (EFC) presumably to avoid superinfection and syncytium formation. Via its interaction with C3/VCP protein, protects the infected cell and probably also the extracellular enveloped virus from complement attack. This is Protein OPG185 (OPG185) from Vaccinia virus (strain Tian Tan) (VACV).